Reading from the N-terminus, the 656-residue chain is Translation factor GUF1, mitochondrial (656 aa).

The transit peptide at 1–28 directs the protein to the mitochondrion; it reads MWKGLLQSTRAAWRGPCVRAPRLPFFRR. One can recognise a tr-type G domain in the interval 55–235; sequence ERYRNFSIVA…NVIENIPGPD (181 aa). GTP-binding positions include 64–71, 128–132, and 182–185; these read AHVDHGKS, DTPGH, and NKID.

Belongs to the TRAFAC class translation factor GTPase superfamily. Classic translation factor GTPase family. LepA subfamily.

It is found in the mitochondrion inner membrane. It carries out the reaction GTP + H2O = GDP + phosphate + H(+). In terms of biological role, promotes mitochondrial protein synthesis. May act as a fidelity factor of the translation reaction, by catalyzing a one-codon backward translocation of tRNAs on improperly translocated ribosomes. Binds to mitochondrial ribosomes in a GTP-dependent manner. In Yarrowia lipolytica (strain CLIB 122 / E 150) (Yeast), this protein is Translation factor GUF1, mitochondrial.